Consider the following 63-residue polypeptide: Large ribosomal subunit protein bL28 (63 aa).

Belongs to the bacterial ribosomal protein bL28 family.

In Selenomonas ruminantium, this protein is Large ribosomal subunit protein bL28 (rpmB).